We begin with the raw amino-acid sequence, 420 residues long: L-glutamine:2-deoxy-scyllo-inosose aminotransferase (420 aa).

At Lys201 the chain carries N6-(pyridoxal phosphate)lysine.

It belongs to the DegT/DnrJ/EryC1 family. L-glutamine:2-deoxy-scyllo-inosose/scyllo-inosose aminotransferase subfamily. Pyridoxal 5'-phosphate is required as a cofactor.

The catalysed reaction is 2-deoxy-L-scyllo-inosose + L-glutamine = 2-deoxy-scyllo-inosamine + 2-oxoglutaramate. It catalyses the reaction 3-amino-2,3-dideoxy-scyllo-inosose + L-glutamine = 2-deoxystreptamine + 2-oxoglutaramate. It participates in metabolic intermediate biosynthesis; 2-deoxystreptamine biosynthesis; 2-deoxystreptamine from D-glucose 6-phosphate: step 2/4. It functions in the pathway antibiotic biosynthesis; gentamicin biosynthesis. Catalyzes the PLP-dependent transamination of 2-deoxy-scyllo-inosose (2-DOI) to form 2-deoxy-scyllo-inosamine (2-DOIA) using L-glutamine as the amino donor. Also catalyzes the transamination of 3-amino-2,3-dideoxy-scyllo-inosose (keto-2-DOIA) into 2-deoxystreptamine (2-DOS). The sequence is that of L-glutamine:2-deoxy-scyllo-inosose aminotransferase (gntA) from Micromonospora echinospora (Micromonospora purpurea).